The primary structure comprises 177 residues: B9 domain-containing protein 2 (177 aa).

The C2 B9-type domain occupies 2–118 (AEVHIIGQIL…EIGTWKVAPN (117 aa)).

It belongs to the B9D family. In terms of assembly, probable component of the tectonic-like complex (also named MKS complex), composed of B9d1, B9d2, Cc2d2a, Mks1 and tctn. Expressed in chordotonal neurons in the antennae (at protein level). Expressed in spermatids (at protein level).

Its subcellular location is the cytoplasm. The protein resides in the cytoskeleton. It is found in the cilium basal body. Its function is as follows. Probable component of the tectonic-like complex (also named MKS complex), a complex localized at the transition zone of primary cilia. Has a role in ciliary structure and function. The protein is B9 domain-containing protein 2 of Drosophila melanogaster (Fruit fly).